Reading from the N-terminus, the 75-residue chain is MSHTIVTEKCIGVAECVNACPVSCIHKGEGKNTINKDWYWIDFAACIDCSICIQVCPTKGAILDKEEPSLQRKLR.

2 4Fe-4S ferredoxin-type domains span residues 2–30 (SHTI…KGEG) and 37–68 (DWYW…KEEP). The [3Fe-4S] cluster site is built by C10 and C16. Residues C20, C46, C49, and C52 each contribute to the [4Fe-4S] cluster site. C56 is a [3Fe-4S] cluster binding site.

Requires [4Fe-4S] cluster as cofactor. It depends on [3Fe-4S] cluster as a cofactor.

Its subcellular location is the plastid. It is found in the chloroplast. This is an uncharacterized protein from Porphyra purpurea (Red seaweed).